The following is an 840-amino-acid chain: DNA helicase MCM8 (840 aa).

The disordered stretch occupies residues 16–54 (QSWKRGRGGGNFSGKWREREHRPDLSKTTGKRTSEQTPQ). A compositionally biased stretch (basic and acidic residues) spans 30–40 (KWREREHRPDL). Residues 402 to 609 (LFKLIVNSLC…HHDHLLSEHV (208 aa)) form the MCM domain. ATP is bound at residue 454–461 (GDPGLGKS). The residue at position 630 (Ser630) is a Phosphoserine.

Belongs to the MCM family. Component of the MCM8-MCM9 complex, which forms a hexamer composed of MCM8 and MCM9. Interacts with the DNA mismatch repair (MMR) complex composed at least of MSH2, MSH3, MSH6, PMS1 and MLH1. Interacts with RAD51; the interaction recruits RAD51 to DNA damage sites. Interacts with the MRN complex composed of MRE11, RAD50 and NBN/NBS1. Interacts with CDC6 and ORC2. Interacts with HROB; the interaction recruits the MCM8-MCM9 complex to DNA damage sites. In terms of tissue distribution, highest levels in placenta, lung and pancreas. Low levels in skeletal muscle and kidney. Expressed in various tumors with highest levels in colon and lung cancers.

The protein resides in the nucleus. It is found in the chromosome. The catalysed reaction is ATP + H2O = ADP + phosphate + H(+). Functionally, component of the MCM8-MCM9 complex, a complex involved in the repair of double-stranded DNA breaks (DBSs) and DNA interstrand cross-links (ICLs) by homologous recombination (HR). Required for DNA resection by the MRE11-RAD50-NBN/NBS1 (MRN) complex by recruiting the MRN complex to the repair site and by promoting the complex nuclease activity. Probably by regulating the localization of the MNR complex, indirectly regulates the recruitment of downstream effector RAD51 to DNA damage sites including DBSs and ICLs. The MCM8-MCM9 complex is dispensable for DNA replication and S phase progression. However, may play a non-essential for DNA replication: may be involved in the activation of the prereplicative complex (pre-RC) during G(1) phase by recruiting CDC6 to the origin recognition complex (ORC). Probably by regulating HR, plays a key role during gametogenesis. Stabilizes MCM9 protein. This Homo sapiens (Human) protein is DNA helicase MCM8 (MCM8).